Consider the following 267-residue polypeptide: Outer membrane protein assembly factor BamD (267 aa).

An N-terminal signal peptide occupies residues 1 to 16 (MKKILLTVSLGLALSA). Cys-17 carries N-palmitoyl cysteine lipidation. Cys-17 carries the S-diacylglycerol cysteine lipid modification.

Belongs to the BamD family. As to quaternary structure, part of the Bam complex.

The protein resides in the cell outer membrane. Part of the outer membrane protein assembly complex, which is involved in assembly and insertion of beta-barrel proteins into the outer membrane. Required for efficient transformation of Neisseria gonorrhoeae by species-related DNA. The sequence is that of Outer membrane protein assembly factor BamD from Neisseria gonorrhoeae.